An 88-amino-acid polypeptide reads, in one-letter code: Apolipoprotein C-I (88 aa).

Residues 1-26 (MRLFISLPVLIVVLAMALEGPAPAQA) form the signal peptide.

It belongs to the apolipoprotein C1 family.

The protein resides in the secreted. Functionally, inhibitor of lipoprotein binding to the low density lipoprotein (LDL) receptor, LDL receptor-related protein, and very low density lipoprotein (VLDL) receptor. Associates with high density lipoproteins (HDL) and the triacylglycerol-rich lipoproteins in the plasma and makes up about 10% of the protein of the VLDL and 2% of that of HDL. Appears to interfere directly with fatty acid uptake and is also the major plasma inhibitor of cholesteryl ester transfer protein (CETP). Modulates the interaction of APOE with beta-migrating VLDL and inhibits binding of beta-VLDL to the LDL receptor-related protein. Binds free fatty acids and reduces their intracellular esterification. The sequence is that of Apolipoprotein C-I (APOC1) from Myodes glareolus (Bank vole).